The chain runs to 185 residues: Ribosome-recycling factor (185 aa).

It belongs to the RRF family.

It localises to the cytoplasm. Functionally, responsible for the release of ribosomes from messenger RNA at the termination of protein biosynthesis. May increase the efficiency of translation by recycling ribosomes from one round of translation to another. This is Ribosome-recycling factor from Thermosipho africanus (strain TCF52B).